The chain runs to 172 residues: uncharacterized protein (172 aa).

One can recognise an N-acetyltransferase domain in the interval 12–172; sequence IRLRCMEDRD…IAVYERKSYN (161 aa).

This is an uncharacterized protein from Bacillus subtilis (strain 168).